The primary structure comprises 158 residues: 6,7-dimethyl-8-ribityllumazine synthase (158 aa).

5-amino-6-(D-ribitylamino)uracil is bound by residues Trp-27, 58–60 (SFE), and 81–83 (VII). 86–87 (GT) contributes to the (2S)-2-hydroxy-3-oxobutyl phosphate binding site. Catalysis depends on His-89, which acts as the Proton donor. Phe-114 lines the 5-amino-6-(D-ribitylamino)uracil pocket. Arg-128 contributes to the (2S)-2-hydroxy-3-oxobutyl phosphate binding site.

The protein belongs to the DMRL synthase family.

It carries out the reaction (2S)-2-hydroxy-3-oxobutyl phosphate + 5-amino-6-(D-ribitylamino)uracil = 6,7-dimethyl-8-(1-D-ribityl)lumazine + phosphate + 2 H2O + H(+). It participates in cofactor biosynthesis; riboflavin biosynthesis; riboflavin from 2-hydroxy-3-oxobutyl phosphate and 5-amino-6-(D-ribitylamino)uracil: step 1/2. Catalyzes the formation of 6,7-dimethyl-8-ribityllumazine by condensation of 5-amino-6-(D-ribitylamino)uracil with 3,4-dihydroxy-2-butanone 4-phosphate. This is the penultimate step in the biosynthesis of riboflavin. The polypeptide is 6,7-dimethyl-8-ribityllumazine synthase (Leifsonia xyli subsp. xyli (strain CTCB07)).